The chain runs to 476 residues: Ribulose bisphosphate carboxylase large chain (476 aa).

Residues 1–2 (MS) constitute a propeptide that is removed on maturation. Pro3 carries the post-translational modification N-acetylproline. The residue at position 14 (Lys14) is an N6,N6,N6-trimethyllysine. Residues Asn123 and Thr173 each coordinate substrate. Lys175 serves as the catalytic Proton acceptor. Lys177 is a substrate binding site. Residues Lys201, Asp203, and Glu204 each coordinate Mg(2+). Lys201 bears the N6-carboxylysine mark. Residues Arg295, His327, and Ser379 each contribute to the substrate site.

Belongs to the RuBisCO large chain family. Type I subfamily. In terms of assembly, heterohexadecamer of 8 large chains and 8 small chains; disulfide-linked. The disulfide link is formed within the large subunit homodimers. It depends on Mg(2+) as a cofactor. The disulfide bond which can form in the large chain dimeric partners within the hexadecamer appears to be associated with oxidative stress and protein turnover.

The protein localises to the plastid. It localises to the chloroplast. It catalyses the reaction 2 (2R)-3-phosphoglycerate + 2 H(+) = D-ribulose 1,5-bisphosphate + CO2 + H2O. The catalysed reaction is D-ribulose 1,5-bisphosphate + O2 = 2-phosphoglycolate + (2R)-3-phosphoglycerate + 2 H(+). Its function is as follows. RuBisCO catalyzes two reactions: the carboxylation of D-ribulose 1,5-bisphosphate, the primary event in carbon dioxide fixation, as well as the oxidative fragmentation of the pentose substrate in the photorespiration process. Both reactions occur simultaneously and in competition at the same active site. The protein is Ribulose bisphosphate carboxylase large chain of Barnadesia caryophylla (Xenophontia caryophylla).